Consider the following 187-residue polypeptide: Dihydrofolate reductase (187 aa).

The DHFR domain occupies 4–185 (PLNCIVAVSQ…IKYKFEVYEK (182 aa)). NADP(+)-binding positions include A10 and 16–22 (GIGKNGD). Residue 31-36 (EFQYFQ) participates in substrate binding. 55–57 (RKT) is a binding site for NADP(+). R71 serves as a coordination point for substrate. Residues 77–79 (SRE) and 117–124 (GGSSVYKE) each bind NADP(+).

The protein belongs to the dihydrofolate reductase family. As to quaternary structure, homodimer.

It is found in the mitochondrion. The protein resides in the cytoplasm. The enzyme catalyses (6S)-5,6,7,8-tetrahydrofolate + NADP(+) = 7,8-dihydrofolate + NADPH + H(+). It functions in the pathway cofactor biosynthesis; tetrahydrofolate biosynthesis; 5,6,7,8-tetrahydrofolate from 7,8-dihydrofolate: step 1/1. Key enzyme in folate metabolism. Contributes to the de novo mitochondrial thymidylate biosynthesis pathway. Catalyzes an essential reaction for de novo glycine and purine synthesis, and for DNA precursor synthesis. Binds its own mRNA and that of DHFR2. The protein is Dihydrofolate reductase (DHFR) of Bos taurus (Bovine).